A 614-amino-acid chain; its full sequence is UvrABC system protein C (614 aa).

Residues 12–91 (ESPGVYLMKG…IKKHRPRYNL (80 aa)) enclose the GIY-YIG domain. The 36-residue stretch at 201 to 236 (RDLLKTYRERMASAAANERYEEAARYRDLIRAIEVT) folds into the UVR domain.

Belongs to the UvrC family. Interacts with UvrB in an incision complex.

The protein localises to the cytoplasm. The UvrABC repair system catalyzes the recognition and processing of DNA lesions. UvrC both incises the 5' and 3' sides of the lesion. The N-terminal half is responsible for the 3' incision and the C-terminal half is responsible for the 5' incision. The protein is UvrABC system protein C of Geobacter metallireducens (strain ATCC 53774 / DSM 7210 / GS-15).